A 525-amino-acid polypeptide reads, in one-letter code: GMP synthase [glutamine-hydrolyzing] (525 aa).

Residues 9–207 (RILILDFGSQ…VRDICQCEAL (199 aa)) form the Glutamine amidotransferase type-1 domain. C86 acts as the Nucleophile in catalysis. Active-site residues include H181 and E183. A GMPS ATP-PPase domain is found at 208-400 (WTPAKIIDDA…LGLPYDMLYR (193 aa)). Position 235-241 (235-241 (SGGVDSS)) interacts with ATP.

Homodimer.

It catalyses the reaction XMP + L-glutamine + ATP + H2O = GMP + L-glutamate + AMP + diphosphate + 2 H(+). It participates in purine metabolism; GMP biosynthesis; GMP from XMP (L-Gln route): step 1/1. Catalyzes the synthesis of GMP from XMP. This Klebsiella pneumoniae subsp. pneumoniae (strain ATCC 700721 / MGH 78578) protein is GMP synthase [glutamine-hydrolyzing].